The primary structure comprises 396 residues: Phosphoglycerate kinase (396 aa).

Substrate contacts are provided by residues 21–23, Arg36, 59–62, Arg119, and Arg156; these read DFN and HLGK. ATP is bound by residues Lys206, Gly294, Glu325, and 352–355; that span reads GGDS.

This sequence belongs to the phosphoglycerate kinase family. As to quaternary structure, monomer.

Its subcellular location is the cytoplasm. The catalysed reaction is (2R)-3-phosphoglycerate + ATP = (2R)-3-phospho-glyceroyl phosphate + ADP. It participates in carbohydrate degradation; glycolysis; pyruvate from D-glyceraldehyde 3-phosphate: step 2/5. The protein is Phosphoglycerate kinase of Listeria monocytogenes serovar 1/2a (strain ATCC BAA-679 / EGD-e).